Here is a 194-residue protein sequence, read N- to C-terminus: [Ribosomal protein uS5]-alanine N-acetyltransferase (194 aa).

The N-acetyltransferase domain maps to 18 to 188 (LVVRLVHDRD…DHVLTALTTP (171 aa)).

It belongs to the acetyltransferase family. RimJ subfamily.

Its subcellular location is the cytoplasm. It carries out the reaction N-terminal L-alanyl-[ribosomal protein uS5] + acetyl-CoA = N-terminal N(alpha)-acetyl-L-alanyl-[ribosomal protein uS5] + CoA + H(+). Its function is as follows. Acetylates the N-terminal alanine of ribosomal protein uS5. The chain is [Ribosomal protein uS5]-alanine N-acetyltransferase (rimJ) from Shigella flexneri.